The following is a 576-amino-acid chain: Eukaryotic translation initiation factor 2A (576 aa).

WD repeat units follow at residues 71 to 119 (LPAA…LVFS), 266 to 307 (DREG…VSII), 308 to 349 (PPAP…KKIT), and 351 to 396 (VEAA…MFYE). 2 disordered regions span residues 422–461 (SASL…QNST) and 475–505 (GSAN…NNKK). A compositionally biased stretch (polar residues) spans 475 to 486 (GSANKHVNSSRQ).

Belongs to the WD repeat EIF2A family.

It localises to the cytoplasm. Its function is as follows. Functions in the early steps of protein synthesis of a small number of specific mRNAs. Acts by directing the binding of methionyl-tRNAi to 40S ribosomal subunits. In contrast to the eIF-2 complex, it binds methionyl-tRNAi to 40S subunits in a codon-dependent manner, whereas the eIF-2 complex binds methionyl-tRNAi to 40S subunits in a GTP-dependent manner. The polypeptide is Eukaryotic translation initiation factor 2A (Schizosaccharomyces pombe (strain 972 / ATCC 24843) (Fission yeast)).